Reading from the N-terminus, the 490-residue chain is Adenylosuccinate lyase (490 aa).

Residue Ala-2 is modified to N-acetylalanine. Substrate-binding positions include 26–27 (RY), 91–93 (RHD), and 117–118 (TS). Lys-153 is subject to N6-acetyllysine. His-165 serves as the catalytic Proton donor/acceptor. Gln-247 contributes to the substrate binding site. Ser-295 acts as the Proton donor/acceptor in catalysis. Lys-301 carries the N6-acetyllysine modification. Positions 309, 335, 340, and 344 each coordinate substrate. A Glycyl lysine isopeptide (Lys-Gly) (interchain with G-Cter in SUMO1) cross-link involves residue Lys-421.

It belongs to the lyase 1 family. Adenylosuccinate lyase subfamily. In terms of assembly, homotetramer. Residues from neighboring subunits contribute catalytic and substrate-binding residues to each active site.

It carries out the reaction N(6)-(1,2-dicarboxyethyl)-AMP = fumarate + AMP. The catalysed reaction is (2S)-2-[5-amino-1-(5-phospho-beta-D-ribosyl)imidazole-4-carboxamido]succinate = 5-amino-1-(5-phospho-beta-D-ribosyl)imidazole-4-carboxamide + fumarate. It participates in purine metabolism; AMP biosynthesis via de novo pathway; AMP from IMP: step 2/2. It functions in the pathway purine metabolism; IMP biosynthesis via de novo pathway; 5-amino-1-(5-phospho-D-ribosyl)imidazole-4-carboxamide from 5-amino-1-(5-phospho-D-ribosyl)imidazole-4-carboxylate: step 2/2. Catalyzes two non-sequential steps in de novo AMP synthesis: converts (S)-2-(5-amino-1-(5-phospho-D-ribosyl)imidazole-4-carboxamido)succinate (SAICAR) to fumarate plus 5-amino-1-(5-phospho-D-ribosyl)imidazole-4-carboxamide, and thereby also contributes to de novo IMP synthesis, and converts succinyladenosine monophosphate (SAMP) to AMP and fumarate. This is Adenylosuccinate lyase (ADSL) from Bos taurus (Bovine).